Consider the following 341-residue polypeptide: Anthranilate phosphoribosyltransferase (341 aa).

5-phospho-alpha-D-ribose 1-diphosphate-binding positions include Gly-79, 82–83 (GD), Thr-87, 89–92 (NIST), 107–115 (KHGNRAATS), and Ser-119. Gly-79 is an anthranilate binding site. Ser-91 is a Mg(2+) binding site. Asn-110 serves as a coordination point for anthranilate. Residue Arg-165 coordinates anthranilate. Residues Asp-224 and Glu-225 each coordinate Mg(2+).

Belongs to the anthranilate phosphoribosyltransferase family. Homodimer. It depends on Mg(2+) as a cofactor.

It carries out the reaction N-(5-phospho-beta-D-ribosyl)anthranilate + diphosphate = 5-phospho-alpha-D-ribose 1-diphosphate + anthranilate. It participates in amino-acid biosynthesis; L-tryptophan biosynthesis; L-tryptophan from chorismate: step 2/5. Catalyzes the transfer of the phosphoribosyl group of 5-phosphorylribose-1-pyrophosphate (PRPP) to anthranilate to yield N-(5'-phosphoribosyl)-anthranilate (PRA). The chain is Anthranilate phosphoribosyltransferase from Symbiobacterium thermophilum (strain DSM 24528 / JCM 14929 / IAM 14863 / T).